Consider the following 254-residue polypeptide: DNA repair protein RecO (254 aa).

This sequence belongs to the RecO family.

Functionally, involved in DNA repair and RecF pathway recombination. The protein is DNA repair protein RecO of Agrobacterium fabrum (strain C58 / ATCC 33970) (Agrobacterium tumefaciens (strain C58)).